We begin with the raw amino-acid sequence, 608 residues long: Kelch-like protein 10 (608 aa).

In terms of domain architecture, BTB spans 39–106; the sequence is CDVVIKVNGF…AYTRTVPITP (68 aa). 6 Kelch repeats span residues 292 to 339, 340 to 386, 388 to 433, 434 to 480, 481 to 527, and 529 to 574; these read ILFA…YLKG, YVYI…VLSN, IYAM…TLYG, KVYI…AYGE, HVYA…VVDD, and LFVV…VVPG. Residue Ser-501 is modified to Phosphoserine.

Self-associates. Interacts with CUL3; indicative for the participation in an E3 ubiquitin ligase complex. As to expression, testis specific.

The protein localises to the cytoplasm. It participates in protein modification; protein ubiquitination. May be a substrate-specific adapter of a CUL3-based E3 ubiquitin-protein ligase complex which mediates the ubiquitination and subsequent proteasomal degradation of target proteins during spermatogenesis. Required for male fertility. The polypeptide is Kelch-like protein 10 (Klhl10) (Mus musculus (Mouse)).